The sequence spans 669 residues: MGKDIKDEILSLRDAIKKWDREYYVDSSPTVGDVTYDKALLRLQYLENRYPEYKTLDSPTLKFGSDLLNDFKEIEHSYPILSLDKAYDVKELLLWVEKMSLEGSNLGFDMGISAEPKIDGCSIVLYYKDGILEKALTRGDGRFGNNVIENVRTIKNVPLCIGERVELVLRGEIYITKKDFLKINHTLDDSYINARNLTSGILRRINSREVVNFPLDIFVYDILYSSLKLNTNHDAFDKLKHFGFKLNPFCKFFCGKNLGENIINYVKEIEEQRERFEYEIDGVVLKVNDFRLRDVLGYTSHHPKWSIAYKFESLRAVSKVIDIVVQVGRSGKITPVANIEKVLIAGAFITSASLHNQDYIDSIGLNVKDVVAISRRGDVIPAVELVVEKLSVGNFKIPNYCPSCKKSLIKEGAHLFCVNIHCPLKIMGHIKYFCSKKCMNIVGLSEKTIEFLFNMNFISSEIDLYTFDFDRLIGLKGFNFKRVNKLKRSIEESKNRPFKKLLLAMGIKDLGINTILLLINNNLNSFDAISLLCQDNKNALVKLLDIKGIGERIAFNIIRAFNDKIILDKFNFFKKLGFKMQEDSMNCVIDSSFLFGKKFCITGSFDEYSRHVLIDKITKKGAIFHSAVSRYLDFLLVGKSPGLKLKKANNLGIKILSLFDIKNLVNLDD.

Residues Asp33–Asp37, Ser82–Leu83, and Glu115 contribute to the NAD(+) site. The active-site N6-AMP-lysine intermediate is the Lys117. The NAD(+) site is built by Arg138, Glu172, Lys286, and Lys310. Residues Cys401, Cys404, Cys417, and Cys422 each contribute to the Zn(2+) site. The BRCT domain maps to Ile589–Asp669.

The protein belongs to the NAD-dependent DNA ligase family. LigA subfamily. The cofactor is Mg(2+). Mn(2+) serves as cofactor.

It catalyses the reaction NAD(+) + (deoxyribonucleotide)n-3'-hydroxyl + 5'-phospho-(deoxyribonucleotide)m = (deoxyribonucleotide)n+m + AMP + beta-nicotinamide D-nucleotide.. Functionally, DNA ligase that catalyzes the formation of phosphodiester linkages between 5'-phosphoryl and 3'-hydroxyl groups in double-stranded DNA using NAD as a coenzyme and as the energy source for the reaction. It is essential for DNA replication and repair of damaged DNA. This is DNA ligase from Borrelia recurrentis (strain A1).